A 316-amino-acid polypeptide reads, in one-letter code: 4-diphosphocytidyl-2-C-methyl-D-erythritol kinase (316 aa).

Lysine 32 is an active-site residue. Position 126–136 (126–136) interacts with ATP; sequence PVGAGLGGGSA. The active site involves aspartate 168.

This sequence belongs to the GHMP kinase family. IspE subfamily.

It catalyses the reaction 4-CDP-2-C-methyl-D-erythritol + ATP = 4-CDP-2-C-methyl-D-erythritol 2-phosphate + ADP + H(+). It participates in isoprenoid biosynthesis; isopentenyl diphosphate biosynthesis via DXP pathway; isopentenyl diphosphate from 1-deoxy-D-xylulose 5-phosphate: step 3/6. Catalyzes the phosphorylation of the position 2 hydroxy group of 4-diphosphocytidyl-2C-methyl-D-erythritol. The polypeptide is 4-diphosphocytidyl-2-C-methyl-D-erythritol kinase (Bifidobacterium longum (strain DJO10A)).